The primary structure comprises 985 residues: Cation channel sperm-associated auxiliary subunit epsilon (985 aa).

A signal peptide spans 1 to 35; it reads MPSAGQRKPGSLLALQALQKWLLRGGVGAMLARQV. The Extracellular segment spans residues 36–937; that stretch reads VAALLLWLSC…ESLGMIPRSS (902 aa). Cystine bridges form between C87–C101, C130–C235, C275–C365, and C439–C442. 3 N-linked (GlcNAc...) asparagine glycosylation sites follow: N91, N143, and N292. N502, N517, and N565 each carry an N-linked (GlcNAc...) asparagine glycan. Cystine bridges form between C617-C724, C737-C919, C753-C786, and C838-C869. A glycan (N-linked (GlcNAc...) asparagine) is linked at N749. Residue N830 is glycosylated (N-linked (GlcNAc...) asparagine). Residues N888, N915, and N920 are each glycosylated (N-linked (GlcNAc...) asparagine). Residues 938–958 traverse the membrane as a helical segment; that stretch reads VYLVAALIFVLMLTFISILVL. Topologically, residues 959–985 are cytoplasmic; it reads SYFWYLKIYRQFIIEPLHKRPAKQKKN.

Belongs to the CATSPERD family. As to quaternary structure, component of the CatSper complex or CatSpermasome composed of the core pore-forming members CATSPER1, CATSPER2, CATSPER3 and CATSPER4 as well as auxiliary members CATSPERB, CATSPERG2, CATSPERD, CATSPERE, CATSPERZ, C2CD6/CATSPERT, SLCO6C1, TMEM249, TMEM262 and EFCAB9. HSPA1 may be an additional auxiliary complex member. The core complex members CATSPER1, CATSPER2, CATSPER3 and CATSPER4 form a heterotetrameric channel. The auxiliary CATSPERB, CATSPERG2, CATSPERD and CATSPERE subunits form a pavilion-like structure over the pore which stabilizes the complex through interactions with CATSPER4, CATSPER3, CATSPER1 and CATSPER2 respectively. SLCO6C1 interacts with CATSPERE and TMEM262/CATSPERH interacts with CATSPERB, further stabilizing the complex. C2CD6/CATSPERT interacts at least with CATSPERD and is required for targeting the CatSper complex in the flagellar membrane. As to expression, testis-specific.

It localises to the cell projection. It is found in the cilium. Its subcellular location is the flagellum membrane. Its function is as follows. Auxiliary component of the CatSper complex, a complex involved in sperm cell hyperactivation. Sperm cell hyperactivation is needed for sperm motility which is essential late in the preparation of sperm for fertilization. The sequence is that of Cation channel sperm-associated auxiliary subunit epsilon from Mus musculus (Mouse).